The sequence spans 119 residues: DNA-directed RNA polymerase subunit omega (119 aa).

Belongs to the RNA polymerase subunit omega family. The RNAP catalytic core consists of 2 alpha, 1 beta, 1 beta' and 1 omega subunit. When a sigma factor is associated with the core the holoenzyme is formed, which can initiate transcription.

The enzyme catalyses RNA(n) + a ribonucleoside 5'-triphosphate = RNA(n+1) + diphosphate. Its function is as follows. Promotes RNA polymerase assembly. Latches the N- and C-terminal regions of the beta' subunit thereby facilitating its interaction with the beta and alpha subunits. The protein is DNA-directed RNA polymerase subunit omega of Caulobacter sp. (strain K31).